Consider the following 285-residue polypeptide: Glutamate racemase (285 aa).

Residues 28 to 29 (DS) and 60 to 61 (YG) contribute to the substrate site. Cys92 serves as the catalytic Proton donor/acceptor. Residue 93-94 (NT) participates in substrate binding. Cys204 serves as the catalytic Proton donor/acceptor. Substrate is bound at residue 205–206 (TH).

The protein belongs to the aspartate/glutamate racemases family.

The catalysed reaction is L-glutamate = D-glutamate. It functions in the pathway cell wall biogenesis; peptidoglycan biosynthesis. Provides the (R)-glutamate required for cell wall biosynthesis. The sequence is that of Glutamate racemase from Escherichia coli O7:K1 (strain IAI39 / ExPEC).